The sequence spans 406 residues: Digeranylgeranylglycerophospholipid reductase 2 (406 aa).

10 residues coordinate FAD: G15, E34, C45, A46, G48, R99, A123, D279, G291, and I292.

It belongs to the geranylgeranyl reductase family. DGGGPL reductase subfamily. FAD serves as cofactor.

The catalysed reaction is a 2,3-bis-O-phytanyl-sn-glycerol 1-phospholipid + 8 oxidized 2[4Fe-4S]-[ferredoxin] = a 2,3-bis-O-(geranylgeranyl)-sn-glycerol 1-phospholipid + 8 reduced 2[4Fe-4S]-[ferredoxin] + 16 H(+). It catalyses the reaction 2,3-bis-O-(phytanyl)-sn-glycerol 1-phosphate + 8 oxidized 2[4Fe-4S]-[ferredoxin] = 2,3-bis-O-(geranylgeranyl)-sn-glycerol 1-phosphate + 8 reduced 2[4Fe-4S]-[ferredoxin] + 16 H(+). The enzyme catalyses a 2,3-bis-O-phytanyl-sn-glycerol 1-phospholipid + 8 A = a 2,3-bis-O-(geranylgeranyl)-sn-glycerol 1-phospholipid + 8 AH2. It carries out the reaction CDP-2,3-bis-O-(geranylgeranyl)-sn-glycerol + 8 AH2 = CDP-2,3-bis-O-(phytanyl)-sn-glycerol + 8 A. The catalysed reaction is archaetidylserine + 8 AH2 = 2,3-bis-O-phytanyl-sn-glycero-3-phospho-L-serine + 8 A. It functions in the pathway membrane lipid metabolism; glycerophospholipid metabolism. Functionally, is involved in the reduction of 2,3-digeranylgeranylglycerophospholipids (unsaturated archaeols) into 2,3-diphytanylglycerophospholipids (saturated archaeols) in the biosynthesis of archaeal membrane lipids. Catalyzes the formation of archaetidic acid (2,3-di-O-phytanyl-sn-glyceryl phosphate) from 2,3-di-O-geranylgeranylglyceryl phosphate (DGGGP) via the hydrogenation of each double bond of the isoprenoid chains. Is also probably able to reduce double bonds of geranyl groups in CDP-2,3-bis-O-(geranylgeranyl)-sn-glycerol and archaetidylserine, thus acting at various stages in the biosynthesis of archaeal membrane lipids. This is Digeranylgeranylglycerophospholipid reductase 2 from Methanococcoides burtonii (strain DSM 6242 / NBRC 107633 / OCM 468 / ACE-M).